The following is a 613-amino-acid chain: Ethylene response sensor 1 (613 aa).

3 helical membrane-spanning segments follow: residues 23-43, 58-78, and 95-115; these read ISDA…IYFV, FGAF…MFFM, and AVVS…LLSV. 2 residues coordinate Cu cation: cysteine 65 and histidine 69. The region spanning 158–307 is the GAF domain; sequence DRHTILRTTL…NVADQVAVAL (150 aa). Residues 350–589 enclose the Histidine kinase domain; the sequence is VMNHEMRTPM…SFIIRLGICN (240 aa). Phosphohistidine; by autocatalysis is present on histidine 353.

It belongs to the ethylene receptor family. Homodimer; disulfide-linked. Heteromer with ETR1. Cu cation is required as a cofactor. Post-translationally, autophosphorylated on both His and Ser residues in the presence of manganese. Loss of His autophosphorylation in the presence of both manganese and magnesium. In terms of tissue distribution, expressed in etiolated seedlings, leaves, stems, roots, flowers, embryos, anthers, carpels and ovules.

It is found in the endoplasmic reticulum membrane. The catalysed reaction is ATP + protein L-histidine = ADP + protein N-phospho-L-histidine.. Its function is as follows. Ethylene receptor related to bacterial two-component regulators. Acts as a redundant negative regulator of ethylene signaling. In Arabidopsis thaliana (Mouse-ear cress), this protein is Ethylene response sensor 1 (ERS1).